A 1060-amino-acid polypeptide reads, in one-letter code: Protein FAM184B (1060 aa).

A compositionally biased stretch (polar residues) spans 1-17 (MASALNSKINPPGTCQG). Residues 1-24 (MASALNSKINPPGTCQGSKADGGA) are disordered. The stretch at 51–159 (ALNTRQDEAE…EMLELKADYE (109 aa)) forms a coiled coil. The segment at 165–191 (LTSHEATPQGRLPQESPETKSEPGQGP) is disordered. Coiled coils occupy residues 192–333 (EMQE…DRMM) and 402–502 (MKQQ…RLEE). Disordered stretches follow at residues 532–566 (QDPCLKLDETSPRGEEYQDKLAAEEGTSSDEEERT), 681–700 (TEERLKKESSHSLQIQHQTH), and 762–803 (GRQQ…GSGE). Basic and acidic residues-rich tracts occupy residues 536–554 (LKLDETSPRGEEYQDKLAA), 681–690 (TEERLKKESS), and 773–785 (DSKDHIIATEERG). A coiled-coil region spans residues 584-769 (LKEKTSKIQR…ALGRQQASSQ (186 aa)). Residues 806-934 (GLWEENAQLQ…KQLTEERRFH (129 aa)) adopt a coiled-coil conformation. Composition is skewed to polar residues over residues 994–1009 (SRINAPPITTSPSLDP) and 1018–1030 (KPNQSTDAKTATR). The interval 994 to 1050 (SRINAPPITTSPSLDPSPSCGRTYKPNQSTDAKTATRTPDGETAQAKEVQQKQGSPH) is disordered.

It belongs to the FAM184 family.

This Homo sapiens (Human) protein is Protein FAM184B (FAM184B).